Consider the following 103-residue polypeptide: MAAKIRQNDEVIVLAGKSKGKRGKVTQVLPNGKVIVEGVNIITKHEKPVPALGKEGGLVKKEAAIDVSNVAIFNPKTNKADRVGFRFEDGKKVRFFKSNNEII.

It belongs to the universal ribosomal protein uL24 family. In terms of assembly, part of the 50S ribosomal subunit.

In terms of biological role, one of two assembly initiator proteins, it binds directly to the 5'-end of the 23S rRNA, where it nucleates assembly of the 50S subunit. Functionally, one of the proteins that surrounds the polypeptide exit tunnel on the outside of the subunit. The polypeptide is Large ribosomal subunit protein uL24 (Pasteurella multocida (strain Pm70)).